We begin with the raw amino-acid sequence, 392 residues long: MGALRRWLPCCCCCCRGGGGGGGGGSVGDGLVWDVALKAHASGDYSVAVAQANEALEDQAQVFVSPAATLVGVYDGHGGPEAARFVNKRLFSLIQEFAAQSGGISAEVLEKAFGETEEEFVASVQRSWPSQPRILSVGSCCLVGAIEDGTLYVANLGDSRAVLGRRSAAGAAHGRKGKNRVVPERLSRDHNVADEDVRRELKELHPDDSHIVLNTHGVWRIKGIIQVSRSIGDVYLKKPEICKSNPMLQQTICPFPLRRPVMSAVPTIKTRKLRPGDQFVIFASDGLWEQLTDEAAVAIVAGSPRRGVAMRLVRAAQLEAARKKDVKYERIRTIEKGQRRHFHDDITVVVLFLDKCRGKAGRGDEIDGTDGPVDVFSLSPDDREDPTRPVLR.

One can recognise a PPM-type phosphatase domain in the interval 44–353 (DYSVAVAQAN…DDITVVVLFL (310 aa)). Mn(2+) is bound by residues D75, G76, D285, and D344. The tract at residues 360 to 392 (AGRGDEIDGTDGPVDVFSLSPDDREDPTRPVLR) is disordered.

It belongs to the PP2C family. Requires Mg(2+) as cofactor. Mn(2+) serves as cofactor.

The enzyme catalyses O-phospho-L-seryl-[protein] + H2O = L-seryl-[protein] + phosphate. The catalysed reaction is O-phospho-L-threonyl-[protein] + H2O = L-threonyl-[protein] + phosphate. The protein is Probable protein phosphatase 2C 29 of Oryza sativa subsp. japonica (Rice).